The sequence spans 470 residues: Crh-like protein UTR2 (470 aa).

A signal peptide spans 1–23 (MRFSTLHFAFLATLSSIFTVVAA). A disulfide bond links C58 and C69. N65, N100, and N125 each carry an N-linked (GlcNAc...) asparagine glycan. A GH16 domain is found at 95-282 (SDYLGNSTEA…WAGGLINWDS (188 aa)). The active-site Nucleophile is the E168. The active-site Proton donor is the E172. E172 serves as a coordination point for chitin. 6 N-linked (GlcNAc...) asparagine glycosylation sites follow: N177, N194, N198, N202, N235, and N239. W259 and T270 together coordinate chitin. N314 and N327 each carry an N-linked (GlcNAc...) asparagine glycan. Positions 347–446 (SDDATGFDPQ…SSGSSSQGVA (100 aa)) are disordered. Low complexity-rich tracts occupy residues 370–384 (TTIT…ITSV) and 392–408 (TANV…QATA). Over residues 409–418 (KSSTGTNTYD) the composition is skewed to polar residues. The segment covering 433–446 (TDSGSSGSSSQGVA) has biased composition (low complexity). S440 is lipidated: GPI-anchor amidated serine. Residues 441 to 470 (SSQGVANSLNESVISGIFASICLGILSFFM) constitute a propeptide, removed in mature form. N-linked (GlcNAc...) asparagine glycosylation is present at N450.

It belongs to the glycosyl hydrolase 16 family. CRH1 subfamily. In terms of processing, the GPI-anchor is attached to the protein in the endoplasmic reticulum and serves to target the protein to the cell surface. There, the glucosamine-inositol phospholipid moiety is cleaved off and the GPI-modified mannoprotein is covalently attached via its lipidless GPI glycan remnant to the 1,6-beta-glucan of the outer cell wall layer.

It is found in the secreted. It localises to the cell wall. The protein resides in the membrane. It carries out the reaction Random endo-hydrolysis of N-acetyl-beta-D-glucosaminide (1-&gt;4)-beta-linkages in chitin and chitodextrins.. In terms of biological role, dual chitinase/transglycosylase that plays a role in cell wall architecture. Chitinase and transglycosylase activities are coupled. Required for the polysaccharide cross-linking at the septa and the cell wall. More specifically, transfers chitin to 1,6-beta-glucan in the cell wall. Plays an important role in fungal pathogenesis via its functions in cell wall assembly and regeneration, filamentation, and adherence to host cells. Acts as a cell surface antigen in acute candidemia patients. The chain is Crh-like protein UTR2 from Candida albicans (strain SC5314 / ATCC MYA-2876) (Yeast).